Here is a 91-residue protein sequence, read N- to C-terminus: uncharacterized protein (91 aa).

This sequence belongs to the UPF0440 family.

This is an uncharacterized protein from Methanothermobacter thermautotrophicus (strain ATCC 29096 / DSM 1053 / JCM 10044 / NBRC 100330 / Delta H) (Methanobacterium thermoautotrophicum).